The chain runs to 722 residues: Cellulose synthase-like protein G2 (722 aa).

The next 2 helical transmembrane spans lie at 25–45 (IYAV…VHSI) and 51–71 (TLIT…WATT). Catalysis depends on residues D139 and D437. 6 helical membrane-spanning segments follow: residues 514–534 (FWPF…VALI), 548–568 (FWLY…DFLL), 583–605 (WMVR…TLNL), 635–655 (PSSS…LAFM), 660–680 (GIFT…FAVV), and 702–722 (ICFL…FFLK).

It belongs to the glycosyltransferase 2 family. Plant cellulose synthase-like G subfamily. Expressed in young seedlings, primarily in the vascular tissue.

The protein resides in the golgi apparatus membrane. In terms of biological role, thought to be a Golgi-localized beta-glycan synthase that polymerize the backbones of noncellulosic polysaccharides (hemicelluloses) of plant cell wall. The sequence is that of Cellulose synthase-like protein G2 (CSLG2) from Arabidopsis thaliana (Mouse-ear cress).